Reading from the N-terminus, the 563-residue chain is F-box/kelch-repeat protein At5g42360 (563 aa).

The F-box domain occupies 129–175; the sequence is YRKHVYLPDDILEMCLMRLPLTSLLNAHLVCKKWQSMANTQRFLQMR. Kelch repeat units follow at residues 184–231, 232–282, and 355–402; these read WLFL…SIHE, EIYI…ATEV, and VLIA…IICN.

The chain is F-box/kelch-repeat protein At5g42360 from Arabidopsis thaliana (Mouse-ear cress).